Consider the following 284-residue polypeptide: Ubiquinone biosynthesis protein COQ4, mitochondrial (284 aa).

Residues His-165, Asp-166, His-169, and Glu-181 each contribute to the Zn(2+) site.

Belongs to the COQ4 family. Component of a multi-subunit COQ enzyme complex, composed of at least COQ3, COQ4, COQ5, COQ6, COQ7 and COQ9. It depends on Zn(2+) as a cofactor.

Its subcellular location is the mitochondrion inner membrane. The catalysed reaction is a 4-hydroxy-3-methoxy-5-(all-trans-polyprenyl)benzoate + H(+) = a 2-methoxy-6-(all-trans-polyprenyl)phenol + CO2. The protein operates within cofactor biosynthesis; ubiquinone biosynthesis. Its function is as follows. Lyase that catalyzes the C1-decarboxylation of 4-hydroxy-3-methoxy-5-(all-trans-polyprenyl)benzoic acid into 2-methoxy-6-(all-trans-polyprenyl)phenol during ubiquinone biosynthesis. In Blastomyces gilchristii (strain SLH14081) (Blastomyces dermatitidis), this protein is Ubiquinone biosynthesis protein COQ4, mitochondrial.